A 352-amino-acid polypeptide reads, in one-letter code: Homeobox protein Mohawk (352 aa).

The segment at 19 to 53 (GASERERGGRPYSGVLDSPHARPEVGIADGPPLKD) is disordered. A DNA-binding region (homeobox; TALE-type) is located at residues 71-132 (VRHKRQALQD…NARRRLKNTV (62 aa)). 2 disordered regions span residues 157 to 194 (LSVSSDDSCSEGGENPPRTHMNEGGYNTPVHHPVIKSE) and 245 to 272 (TRQRNHSGSFSSNEFEEELVSPSSSETE).

The protein belongs to the TALE/IRO homeobox family.

The protein localises to the nucleus. In terms of biological role, may act as a morphogenetic regulator of cell adhesion. This chain is Homeobox protein Mohawk (MKX), found in Pongo abelii (Sumatran orangutan).